Consider the following 303-residue polypeptide: HTH-type transcriptional regulator YjiE (303 aa).

The HTH lysR-type domain maps to 11 to 68 (IETKWLYDFLTLEKCRNFSQAAVSRNVSQPAFSRRIRALEQAIGVELFNRQVTPLQLS). Residues 28–47 (FSQAAVSRNVSQPAFSRRIR) constitute a DNA-binding region (H-T-H motif).

Belongs to the LysR transcriptional regulatory family. Forms dimers, tetramers and possibly dodecameric complexes; oligomerization may be governed by cellular concentrations. DNA-binding seems to decrease oligomerization.

Its function is as follows. Protects cells from HOCl (hypochlorite) stress but not peroxide or diamide stress. Decreases the intracellular load of reactive oxygen species by up-regulating genes involved in methionine and cysteine biosynthesis and down-regulating Fur-regulated genes involved in iron acquisition. Has also been suggested to down-regulate expression of the flagellar regulon, decreasing motility, but this activity was not confirmed in a second study. This chain is HTH-type transcriptional regulator YjiE (yjiE), found in Escherichia coli (strain K12).